The following is a 172-amino-acid chain: Putative phosphoesterase Bcer98_0945 (172 aa).

His-34 serves as the catalytic Proton donor. 2 consecutive short sequence motifs (HXTX) follow at residues 34–37 (HITL) and 115–118 (HLTI). The active-site Proton acceptor is the His-115.

Belongs to the 2H phosphoesterase superfamily. YjcG family.

In Bacillus cytotoxicus (strain DSM 22905 / CIP 110041 / 391-98 / NVH 391-98), this protein is Putative phosphoesterase Bcer98_0945.